A 594-amino-acid polypeptide reads, in one-letter code: Alanine--tRNA ligase (594 aa).

The Zn(2+) site is built by histidine 456, histidine 460, cysteine 558, and histidine 562.

This sequence belongs to the class-II aminoacyl-tRNA synthetase family. It depends on Zn(2+) as a cofactor.

Its subcellular location is the cytoplasm. The enzyme catalyses tRNA(Ala) + L-alanine + ATP = L-alanyl-tRNA(Ala) + AMP + diphosphate. In terms of biological role, catalyzes the attachment of alanine to tRNA(Ala) in a two-step reaction: alanine is first activated by ATP to form Ala-AMP and then transferred to the acceptor end of tRNA(Ala). Also edits incorrectly charged Ser-tRNA(Ala) and Gly-tRNA(Ala) via its editing domain. In Borrelia garinii subsp. bavariensis (strain ATCC BAA-2496 / DSM 23469 / PBi) (Borreliella bavariensis), this protein is Alanine--tRNA ligase (alaS).